Here is a 72-residue protein sequence, read N- to C-terminus: Threonine dehydratase operon activator protein (72 aa).

Functionally, probable trans-acting positive activator for the tdc operon. The protein is Threonine dehydratase operon activator protein (tdcR) of Escherichia coli (strain K12).